A 319-amino-acid polypeptide reads, in one-letter code: Methionyl-tRNA formyltransferase (319 aa).

Residue 116-119 (SLLP) participates in (6S)-5,6,7,8-tetrahydrofolate binding.

It belongs to the Fmt family.

It catalyses the reaction L-methionyl-tRNA(fMet) + (6R)-10-formyltetrahydrofolate = N-formyl-L-methionyl-tRNA(fMet) + (6S)-5,6,7,8-tetrahydrofolate + H(+). Functionally, attaches a formyl group to the free amino group of methionyl-tRNA(fMet). The formyl group appears to play a dual role in the initiator identity of N-formylmethionyl-tRNA by promoting its recognition by IF2 and preventing the misappropriation of this tRNA by the elongation apparatus. The polypeptide is Methionyl-tRNA formyltransferase (Chlorobium phaeovibrioides (strain DSM 265 / 1930) (Prosthecochloris vibrioformis (strain DSM 265))).